Reading from the N-terminus, the 230-residue chain is Probable C4-dicarboxylate response regulator DctR (230 aa).

One can recognise a Response regulatory domain in the interval 8–124; the sequence is RVLLIEDDPM…RLKAALTQYE (117 aa). D59 is modified (4-aspartylphosphate). The H-T-H motif DNA-binding region spans 183 to 209; it reads EEIGRDVGLARVTVRRYLNYLESVGQV.

Phosphorylated by DctS.

The protein resides in the cytoplasm. Member of the two-component regulatory system DctS/DctR. Essential for expression of DctP. The chain is Probable C4-dicarboxylate response regulator DctR (dctR) from Halalkalibacterium halodurans (strain ATCC BAA-125 / DSM 18197 / FERM 7344 / JCM 9153 / C-125) (Bacillus halodurans).